The primary structure comprises 122 residues: Small ribosomal subunit protein uS13 (122 aa).

Residues Val-98 to Lys-122 are disordered.

The protein belongs to the universal ribosomal protein uS13 family. As to quaternary structure, part of the 30S ribosomal subunit. Forms a loose heterodimer with protein S19. Forms two bridges to the 50S subunit in the 70S ribosome.

Functionally, located at the top of the head of the 30S subunit, it contacts several helices of the 16S rRNA. In the 70S ribosome it contacts the 23S rRNA (bridge B1a) and protein L5 of the 50S subunit (bridge B1b), connecting the 2 subunits; these bridges are implicated in subunit movement. Contacts the tRNAs in the A and P-sites. This is Small ribosomal subunit protein uS13 from Nautilia profundicola (strain ATCC BAA-1463 / DSM 18972 / AmH).